A 335-amino-acid chain; its full sequence is Fructose-1,6-bisphosphatase class 1 (335 aa).

Mg(2+) contacts are provided by Glu-89, Asp-112, Leu-114, and Asp-115. Substrate-binding positions include Asp-115–Ser-118, Asn-208, Tyr-241, and Lys-271. Residue Glu-277 coordinates Mg(2+).

It belongs to the FBPase class 1 family. As to quaternary structure, homotetramer. Requires Mg(2+) as cofactor.

It localises to the cytoplasm. It catalyses the reaction beta-D-fructose 1,6-bisphosphate + H2O = beta-D-fructose 6-phosphate + phosphate. It functions in the pathway carbohydrate biosynthesis; gluconeogenesis. The chain is Fructose-1,6-bisphosphatase class 1 from Proteus mirabilis (strain HI4320).